The primary structure comprises 177 residues: MSRIGKKPISVPSGVTATVEGQLVKAKGPKGELSYIVNDEVLVKFEGNVISVSPRDQSKDARSKWGMSRSMIENIFCGVKNGFEKKLEINGVGYRAALQGKDVQLSLGFSHDVIYKVPPGITVTVPKPTEIVISGIDKQQVGQVAAEIREYRRPEPYKGKGVKHADECIFRKEGKKK.

It belongs to the universal ribosomal protein uL6 family. In terms of assembly, part of the 50S ribosomal subunit.

In terms of biological role, this protein binds to the 23S rRNA, and is important in its secondary structure. It is located near the subunit interface in the base of the L7/L12 stalk, and near the tRNA binding site of the peptidyltransferase center. The protein is Large ribosomal subunit protein uL6 of Bartonella quintana (strain Toulouse) (Rochalimaea quintana).